A 118-amino-acid chain; its full sequence is DNA-directed RNA polymerase subunit omega (118 aa).

This sequence belongs to the RNA polymerase subunit omega family. As to quaternary structure, the RNAP catalytic core consists of 2 alpha, 1 beta, 1 beta' and 1 omega subunit. When a sigma factor is associated with the core the holoenzyme is formed, which can initiate transcription.

It carries out the reaction RNA(n) + a ribonucleoside 5'-triphosphate = RNA(n+1) + diphosphate. Its function is as follows. Promotes RNA polymerase assembly. Latches the N- and C-terminal regions of the beta' subunit thereby facilitating its interaction with the beta and alpha subunits. The protein is DNA-directed RNA polymerase subunit omega of Paracoccus denitrificans (strain Pd 1222).